The following is a 676-amino-acid chain: Double-stranded RNA-specific editase Adar (676 aa).

Positions 1 to 51 are disordered; it reads MKFDSRVMLNSANNNSPQHPVSAPSDINMNGYNRKLPQKRGYEMPKYSDPK. The span at 8 to 31 shows a compositional bias: polar residues; that stretch reads MLNSANNNSPQHPVSAPSDINMNG. Positions 40 to 51 are enriched in basic and acidic residues; sequence RGYEMPKYSDPK. DRBM domains are found at residues 61-127 and 197-272; these read QPKN…SFIQ and ITVD…SLCN. The A to I editase domain occupies 348–672; it reads SVSTGTKCVS…LKKPIEQDEF (325 aa). Residue His372 participates in Zn(2+) binding. Residue Glu374 is the Proton donor of the active site. Residues Cys430 and Cys493 each coordinate Zn(2+).

In terms of tissue distribution, expressed in embryonic nervous system; late stage 13 sees ventral nerve cord expression which spreads to brain by stage 16. Expression is maintained through to adulthood.

Functionally, has A-to-I RNA editing activity on extended dsRNA: edits RNA-binding protein Rnp4F. A-to-I editing of pre-mRNAs acts predominantly through nervous system targets to affect adult nervous system integrity, function and behavior. Essential for adaptation to environmental stresses, such as oxygen deprivation, and for the prevention of premature neuronal degeneration, through the editing of ion channels as targets. In Drosophila melanogaster (Fruit fly), this protein is Double-stranded RNA-specific editase Adar.